The primary structure comprises 286 residues: 4-diphosphocytidyl-2-C-methyl-D-erythritol kinase (286 aa).

Lys-12 is an active-site residue. Position 96–106 (96–106) interacts with ATP; the sequence is PHGAGLGGGSA. Residue Asp-138 is part of the active site.

It belongs to the GHMP kinase family. IspE subfamily.

It carries out the reaction 4-CDP-2-C-methyl-D-erythritol + ATP = 4-CDP-2-C-methyl-D-erythritol 2-phosphate + ADP + H(+). It functions in the pathway isoprenoid biosynthesis; isopentenyl diphosphate biosynthesis via DXP pathway; isopentenyl diphosphate from 1-deoxy-D-xylulose 5-phosphate: step 3/6. Catalyzes the phosphorylation of the position 2 hydroxy group of 4-diphosphocytidyl-2C-methyl-D-erythritol. This Nitratidesulfovibrio vulgaris (strain ATCC 29579 / DSM 644 / CCUG 34227 / NCIMB 8303 / VKM B-1760 / Hildenborough) (Desulfovibrio vulgaris) protein is 4-diphosphocytidyl-2-C-methyl-D-erythritol kinase.